The sequence spans 35 residues: Antimicrobial peptide 3 (35 aa).

The 32-residue stretch at 4 to 35 folds into the Chitin-binding type-1 domain; that stretch reads GGECGGRFGGCAGGQCCSRFGFCGSGPKYCAH. Intrachain disulfides connect Cys7-Cys20, Cys14-Cys26, and Cys19-Cys33.

In terms of processing, contains 3 disulfide bonds. As to expression, expressed in leaf, flower, stem and seed with highest expression in leaf (at protein level).

Its function is as follows. Has antifungal activity against A.niger (IC(50)=5.4 uM), B.sorokiniana (IC(50)=2.0 uM), B.cinerea (IC(50)=1.6 uM), F.solani (IC(50)=3.7 uM) and A.alternata (IC(50)=5.0 uM). Binds chitin in vitro. Has no antibacterial activity at concentrations up to 10 uM. This chain is Antimicrobial peptide 3, found in Stellaria media (Common chickweed).